The primary structure comprises 353 residues: D-alanine--D-alanine ligase (353 aa).

One can recognise an ATP-grasp domain in the interval 135-344 (KMVFAQAGLA…FPQLVDRLVQ (210 aa)). 171–226 (EAQLDYPMFVKPANLGSSVGISKVRTRDELEKALDLAAEYDRRLIVEAGVTAREVE) provides a ligand contact to ATP. Asp-297, Glu-311, and Asn-313 together coordinate Mg(2+).

Belongs to the D-alanine--D-alanine ligase family. It depends on Mg(2+) as a cofactor. Mn(2+) is required as a cofactor.

It localises to the cytoplasm. The enzyme catalyses 2 D-alanine + ATP = D-alanyl-D-alanine + ADP + phosphate + H(+). Its pathway is cell wall biogenesis; peptidoglycan biosynthesis. Functionally, cell wall formation. The sequence is that of D-alanine--D-alanine ligase from Picosynechococcus sp. (strain ATCC 27264 / PCC 7002 / PR-6) (Agmenellum quadruplicatum).